The chain runs to 477 residues: MSGVMCLKASDTWASGIRSQPQGCLGKWRSMRCKHTRMHLAHLGNSRQLISLGPPRTREDGSRISQQVEQSRSQVQAIGEKVSLAQAKIEKIKGSKKAIKVFSSAKYPAPERLQEYGSIFTDAQDPGLQRRPRHRIQSKQRPLDERALQEKLKDFPVCVSTKPEPEDDAEEGLGGLPSNISSVSSLLLFNTTENLYKKYVFLDPLAGAVTKTHVMLGAETEEKLFDAPLSISKREQLEQQVPENYFYVPDLGQVPEIDVPSYLPDLPGIANDLMYIADLGPGIAPSAPGTIPELPTFHTEVAEPLKVDLQDGVLTPPPPPPPPPPAPEVLASAPPLPPSTAAPVGQGARQDDSSSSASPSVQGAPREVVDPSGGWATLLESIRQAGGIGKAKLRSMKERKLEKQQQKEQEQVRATSQGGHLMSDLFNKLVMRRKGISGKGPGAGDGPGGAFARVSDSIPPLPPPQQPQAEDEDDWES.

A WHD1 region spans residues 1 to 180; the sequence is MSGVMCLKAS…EGLGGLPSNI (180 aa). Disordered stretches follow at residues 310–420 and 434–477; these read QDGV…QGGH and KGIS…DWES. The segment covering 315-327 has biased composition (pro residues); it reads TPPPPPPPPPPAP. The interval 362–477 is VCA; sequence QGAPREVVDP…QAEDEDDWES (116 aa). In terms of domain architecture, WH2 spans 374-396; it reads GWATLLESIRQAGGIGKAKLRSM. Positions 395 to 411 are enriched in basic and acidic residues; the sequence is SMKERKLEKQQQKEQEQ. Positions 437–449 are enriched in gly residues; sequence SGKGPGAGDGPGG.

The protein belongs to the WASH1 family. Interacts (via WHD1 region) with WASHC2C; the interaction is direct.

The protein localises to the early endosome membrane. Its subcellular location is the recycling endosome membrane. May act as a nucleation-promoting factor at the surface of endosomes, where it recruits and activates the Arp2/3 complex to induce actin polymerization, playing a key role in the fission of tubules that serve as transport intermediates during endosome sorting. The sequence is that of Putative WAS protein family homolog 4 (WASH4P) from Homo sapiens (Human).